A 150-amino-acid chain; its full sequence is Sec-independent protein translocase protein TatB (150 aa).

The helical transmembrane segment at 1–21 threads the bilayer; the sequence is MFDLSWSEIALVGVVALIVIG. Residues 77-86 show a composition bias toward basic and acidic residues; the sequence is KIDQAIDPDG. Residues 77 to 150 are disordered; it reads KIDQAIDPDG…RTDGSLPPQD (74 aa). Pro residues predominate over residues 109–135; that stretch reads AAPPSLPPQAPAQPVPPATGAAPPSPS.

It belongs to the TatB family. As to quaternary structure, the Tat system comprises two distinct complexes: a TatABC complex, containing multiple copies of TatA, TatB and TatC subunits, and a separate TatA complex, containing only TatA subunits. Substrates initially bind to the TatABC complex, which probably triggers association of the separate TatA complex to form the active translocon.

It localises to the cell inner membrane. Its function is as follows. Part of the twin-arginine translocation (Tat) system that transports large folded proteins containing a characteristic twin-arginine motif in their signal peptide across membranes. Together with TatC, TatB is part of a receptor directly interacting with Tat signal peptides. TatB may form an oligomeric binding site that transiently accommodates folded Tat precursor proteins before their translocation. This Rhodospirillum rubrum (strain ATCC 11170 / ATH 1.1.1 / DSM 467 / LMG 4362 / NCIMB 8255 / S1) protein is Sec-independent protein translocase protein TatB.